The primary structure comprises 338 residues: 1-aminocyclopropane-1-carboxylate deaminase (338 aa).

Lys-51 is modified (N6-(pyridoxal phosphate)lysine). Residue Ser-78 is the Nucleophile of the active site.

It belongs to the ACC deaminase/D-cysteine desulfhydrase family. In terms of assembly, homotrimer. The cofactor is pyridoxal 5'-phosphate.

It carries out the reaction 1-aminocyclopropane-1-carboxylate + H2O = 2-oxobutanoate + NH4(+). In terms of biological role, catalyzes a cyclopropane ring-opening reaction, the irreversible conversion of 1-aminocyclopropane-1-carboxylate (ACC) to ammonia and alpha-ketobutyrate. Allows growth on ACC as a nitrogen source. In Burkholderia cenocepacia (strain HI2424), this protein is 1-aminocyclopropane-1-carboxylate deaminase.